A 312-amino-acid chain; its full sequence is Glycine--tRNA ligase alpha subunit (312 aa).

The protein belongs to the class-II aminoacyl-tRNA synthetase family. Tetramer of two alpha and two beta subunits.

The protein resides in the cytoplasm. It catalyses the reaction tRNA(Gly) + glycine + ATP = glycyl-tRNA(Gly) + AMP + diphosphate. The chain is Glycine--tRNA ligase alpha subunit from Thiobacillus denitrificans (strain ATCC 25259 / T1).